The following is a 485-amino-acid chain: Probable cytosol aminopeptidase (485 aa).

The Mn(2+) site is built by Lys251 and Asp256. Lys263 is a catalytic residue. Asp274, Asp333, and Glu335 together coordinate Mn(2+). Residue Arg337 is part of the active site.

Belongs to the peptidase M17 family. Mn(2+) is required as a cofactor.

The protein localises to the cytoplasm. It carries out the reaction Release of an N-terminal amino acid, Xaa-|-Yaa-, in which Xaa is preferably Leu, but may be other amino acids including Pro although not Arg or Lys, and Yaa may be Pro. Amino acid amides and methyl esters are also readily hydrolyzed, but rates on arylamides are exceedingly low.. The enzyme catalyses Release of an N-terminal amino acid, preferentially leucine, but not glutamic or aspartic acids.. Presumably involved in the processing and regular turnover of intracellular proteins. Catalyzes the removal of unsubstituted N-terminal amino acids from various peptides. The sequence is that of Probable cytosol aminopeptidase from Brucella melitensis biotype 1 (strain ATCC 23456 / CCUG 17765 / NCTC 10094 / 16M).